Consider the following 324-residue polypeptide: Ribose 1,5-bisphosphate isomerase (324 aa).

Residues 22–25 (RGAG) and arginine 65 each bind substrate. Cysteine 135 (proton acceptor) is an active-site residue. Substrate is bound at residue 137 to 139 (SKA). Aspartate 204 acts as the Proton donor in catalysis. Residues 214 to 215 (NK) and lysine 240 each bind substrate.

This sequence belongs to the eIF-2B alpha/beta/delta subunits family. R15P isomerase subfamily.

It carries out the reaction alpha-D-ribose 1,5-bisphosphate = D-ribulose 1,5-bisphosphate. Catalyzes the isomerization of ribose 1,5-bisphosphate (R15P) to ribulose 1,5-bisphosphate (RuBP), the CO(2) acceptor and substrate for RubisCO. Functions in an archaeal AMP degradation pathway, together with AMP phosphorylase and RubisCO. The chain is Ribose 1,5-bisphosphate isomerase from Pyrococcus horikoshii (strain ATCC 700860 / DSM 12428 / JCM 9974 / NBRC 100139 / OT-3).